We begin with the raw amino-acid sequence, 371 residues long: MKFQLHCRDHEARRGTLTLAHGTVETPAFMPVGTYGAVKGLSPDELHTLGAGIILGNTFHLWLRPGLEVIGAHGGLHRLMNWDGPILTDSGGFQVFSLGALRKICEEGVRFRSPVNGDTCFLTPEESMRIQQVLNSDIVMIFDECTPYPVDMQIAESSMQLSLRWAERSKTAHAGNPNALFGIVQGGMYESLRDHSAAGLCAIGFDGYAIGGLSVGEPKADMQRILRHTAPQLPADKPRYLMGVGTPEDIVHAVAQGIDLFDCVLPTRNARNGWLYTSQGILRLRNSRYRLDTSPPDEHCDCYTCRHFTRAYLHHLQRTGEMLGARLNSLHNLHYYQRLMANIRKAIETGQFEQFARKFSGQDFMLKCASV.

Catalysis depends on Asp-89, which acts as the Proton acceptor. Residues 89-93 (DSGGF), Asp-143, Gln-185, and Gly-212 each bind substrate. Residues 243–249 (GVGTPED) form an RNA binding region. The Nucleophile role is filled by Asp-262. The interval 267 to 271 (TRNAR) is RNA binding; important for wobble base 34 recognition. Zn(2+)-binding residues include Cys-300, Cys-302, Cys-305, and His-331.

This sequence belongs to the queuine tRNA-ribosyltransferase family. In terms of assembly, homodimer. Within each dimer, one monomer is responsible for RNA recognition and catalysis, while the other monomer binds to the replacement base PreQ1. Zn(2+) serves as cofactor.

It catalyses the reaction 7-aminomethyl-7-carbaguanine + guanosine(34) in tRNA = 7-aminomethyl-7-carbaguanosine(34) in tRNA + guanine. The protein operates within tRNA modification; tRNA-queuosine biosynthesis. Functionally, catalyzes the base-exchange of a guanine (G) residue with the queuine precursor 7-aminomethyl-7-deazaguanine (PreQ1) at position 34 (anticodon wobble position) in tRNAs with GU(N) anticodons (tRNA-Asp, -Asn, -His and -Tyr). Catalysis occurs through a double-displacement mechanism. The nucleophile active site attacks the C1' of nucleotide 34 to detach the guanine base from the RNA, forming a covalent enzyme-RNA intermediate. The proton acceptor active site deprotonates the incoming PreQ1, allowing a nucleophilic attack on the C1' of the ribose to form the product. After dissociation, two additional enzymatic reactions on the tRNA convert PreQ1 to queuine (Q), resulting in the hypermodified nucleoside queuosine (7-(((4,5-cis-dihydroxy-2-cyclopenten-1-yl)amino)methyl)-7-deazaguanosine). The polypeptide is Queuine tRNA-ribosyltransferase (Nitrosomonas europaea (strain ATCC 19718 / CIP 103999 / KCTC 2705 / NBRC 14298)).